The primary structure comprises 1026 residues: Translation initiation factor IF-2, chloroplastic (1026 aa).

Residues 1-63 (MPSMLVLVGT…KKWLCRYSVS (63 aa)) constitute a chloroplast transit peptide. The segment covering 158–173 (AEKLEIPKPGNKEGGE) has biased composition (basic and acidic residues). Disordered stretches follow at residues 158–208 (AEKL…TMKS), 230–284 (FNRG…PPVK), and 300–393 (VSEE…KWSK). A compositionally biased stretch (polar residues) spans 178–194 (SQPSANSSNSRNGSYAN). The segment covering 254–269 (LAPPQPPFRPQPPVRP) has biased composition (pro residues). The segment covering 306–317 (SSVKSKERKPIL) has biased composition (basic and acidic residues). Over residues 384–393 (SGRKGRKWSK) the composition is skewed to basic residues. The tr-type G domain maps to 499-672 (DRPPVITIMG…MLVAELQELK (174 aa)). Residues 508 to 515 (GHVDHGKT) are G1. Residue 508 to 515 (GHVDHGKT) coordinates GTP. The tract at residues 533 to 537 (GITQG) is G2. Positions 558-561 (DTPG) are G3. Residues 558 to 562 (DTPGH) and 612 to 615 (NKID) contribute to the GTP site. The segment at 612-615 (NKID) is G4. Residues 648 to 650 (SAL) are G5.

The protein belongs to the TRAFAC class translation factor GTPase superfamily. Classic translation factor GTPase family. IF-2 subfamily.

Its subcellular location is the plastid. The protein localises to the chloroplast. Its function is as follows. One of the essential components for the initiation of protein synthesis. Protects formylmethionyl-tRNA from spontaneous hydrolysis and promotes its binding to the 30S ribosomal subunits. Also involved in the hydrolysis of GTP during the formation of the 70S ribosomal complex. In Arabidopsis thaliana (Mouse-ear cress), this protein is Translation initiation factor IF-2, chloroplastic.